The primary structure comprises 398 residues: Acetate kinase (398 aa).

Position 7 (N7) interacts with Mg(2+). An ATP-binding site is contributed by K14. R96 contributes to the substrate binding site. Catalysis depends on D153, which acts as the Proton donor/acceptor. ATP contacts are provided by residues 210 to 214 (HLGNG), 284 to 286 (DLR), and 332 to 336 (GIGEH). E385 serves as a coordination point for Mg(2+).

Belongs to the acetokinase family. In terms of assembly, homodimer. It depends on Mg(2+) as a cofactor. Mn(2+) is required as a cofactor.

Its subcellular location is the cytoplasm. It carries out the reaction acetate + ATP = acetyl phosphate + ADP. The protein operates within metabolic intermediate biosynthesis; acetyl-CoA biosynthesis; acetyl-CoA from acetate: step 1/2. Its function is as follows. Catalyzes the formation of acetyl phosphate from acetate and ATP. Can also catalyze the reverse reaction. In Acaryochloris marina (strain MBIC 11017), this protein is Acetate kinase.